A 463-amino-acid chain; its full sequence is uncharacterized protein (463 aa).

A TRAM domain is found at 12–70 (LWQQGSVVELTITGLNHQGEGIGRFNERVVFVPDTAPGDRLEVRLVKVKRNYALAQLLK). [4Fe-4S] cluster contacts are provided by Cys83, Cys89, Cys92, and Cys171. S-adenosyl-L-methionine-binding residues include Gln295, Tyr324, Glu345, and Asp390. The active-site Nucleophile is Cys417.

The protein belongs to the class I-like SAM-binding methyltransferase superfamily. RNA M5U methyltransferase family.

This is an uncharacterized protein from Synechocystis sp. (strain ATCC 27184 / PCC 6803 / Kazusa).